The primary structure comprises 387 residues: Putative transmembrane protein At3g54730 (387 aa).

The segment covering 10-25 (PAPPLLLPSPNPPPCA) has biased composition (pro residues). The disordered stretch occupies residues 10 to 45 (PAPPLLLPSPNPPPCALPQDLTSLVSPSEPPDPPDP). 8 consecutive transmembrane segments (helical) span residues 97–117 (VFPL…HPLV), 128–148 (GSNF…ILQF), 154–174 (VMIS…MILL), 186–206 (VLFS…VGLI), 221–241 (IQKL…FLEI), 292–312 (SWCF…YPLE), 335–355 (FSTI…FIFF), and 362–382 (PFVA…LNHF).

It is found in the membrane. The chain is Putative transmembrane protein At3g54730 from Arabidopsis thaliana (Mouse-ear cress).